The primary structure comprises 389 residues: Terminal nucleotidyltransferase 5D (389 aa).

The protein belongs to the TENT family. As to expression, restricted to testis.

It catalyses the reaction RNA(n) + ATP = RNA(n)-3'-adenine ribonucleotide + diphosphate. Catalyzes the transfer of one adenosine molecule from an ATP to an mRNA poly(A) tail bearing a 3'-OH terminal group. This Homo sapiens (Human) protein is Terminal nucleotidyltransferase 5D.